A 391-amino-acid polypeptide reads, in one-letter code: Oocyte zinc finger protein XlCOF7.2 (391 aa).

4 C2H2-type zinc fingers span residues 284 to 306, 312 to 334, 340 to 362, and 368 to 391; these read FPCSECGKCFINQSTLARHYRTH, YPCSECGKCFASSTYLRDHRRIH, SSCSECGKYFLNCWSLARHHRTH, and YSCSECGKSFAISSDLAGHRRRTH.

This sequence belongs to the krueppel C2H2-type zinc-finger protein family.

It localises to the nucleus. Functionally, may be involved in transcriptional regulation. The protein is Oocyte zinc finger protein XlCOF7.2 of Xenopus laevis (African clawed frog).